Consider the following 105-residue polypeptide: uncharacterized protein (105 aa).

The protein belongs to the baculoviridae 11 kDa protein family.

This is an uncharacterized protein from Autographa californica nuclear polyhedrosis virus (AcMNPV).